A 268-amino-acid chain; its full sequence is MSSMKIAIAGASGRMGRMLIEAVLAAPDATLAGALDRTGSPQLGQDAGAFLGKQTGVALTDDIERVCAEADYLIDFTRPEGTLAHLDAALRHDVKLVIGTTGFSEPQKAQLRAAGGKIALVFSANMSVGVNVTMKLLEFAAKQFAQGYDIEIIEAHHRHKVDAPSGTALMMGETIAAATGRTLDDCAVYGRHGVTGERDPSTIGFSAIRGGDIVGDHTVLFAGIGERIEITHKSASRVSYAQGALRAARFLAGHQAGFFDMQDVLGLR.

Residues 10-15 (GASGRM) and D36 each bind NAD(+). R37 is an NADP(+) binding site. Residues 99 to 101 (GTT) and 123 to 126 (SANM) contribute to the NAD(+) site. H156 functions as the Proton donor/acceptor in the catalytic mechanism. H157 lines the (S)-2,3,4,5-tetrahydrodipicolinate pocket. Catalysis depends on K160, which acts as the Proton donor. 166 to 167 (GT) lines the (S)-2,3,4,5-tetrahydrodipicolinate pocket.

Belongs to the DapB family.

It is found in the cytoplasm. The enzyme catalyses (S)-2,3,4,5-tetrahydrodipicolinate + NAD(+) + H2O = (2S,4S)-4-hydroxy-2,3,4,5-tetrahydrodipicolinate + NADH + H(+). It carries out the reaction (S)-2,3,4,5-tetrahydrodipicolinate + NADP(+) + H2O = (2S,4S)-4-hydroxy-2,3,4,5-tetrahydrodipicolinate + NADPH + H(+). Its pathway is amino-acid biosynthesis; L-lysine biosynthesis via DAP pathway; (S)-tetrahydrodipicolinate from L-aspartate: step 4/4. Its function is as follows. Catalyzes the conversion of 4-hydroxy-tetrahydrodipicolinate (HTPA) to tetrahydrodipicolinate. This Burkholderia pseudomallei (strain 1710b) protein is 4-hydroxy-tetrahydrodipicolinate reductase.